Consider the following 115-residue polypeptide: Double-headed protease inhibitor, submandibular gland (115 aa).

2 Kazal-like domains span residues 6 to 66 (IGRE…ACDI) and 67 to 115 (ECTE…HGEC). Disulfide bonds link C12–C46, C24–C43, C32–C64, C68–C97, C75–C94, and C83–C115.

It is found in the secreted. Its function is as follows. This inhibitor is composed of two homologous actively inhibiting halves: one which inhibits trypsin, the other which inhibits elastase. This Vulpes vulpes (Red fox) protein is Double-headed protease inhibitor, submandibular gland.